The following is a 312-amino-acid chain: Aquaporin Lacbi1:391485 (312 aa).

The Cytoplasmic portion of the chain corresponds to 1–50 (MDDKFDDDALPNSKTTPEDYGDKLAEYDYTNTFPNTWMRLREPFREYIAE). A helical transmembrane segment spans residues 51-71 (FVGVAVLIIFGVGADCQVVLS). Residues 72–89 (ANTGVAPSPKGDYLSLNC) lie on the Extracellular side of the membrane. Residues 90–110 (GWAIGTAMGVWISGGISGGHI) form a helical membrane-spanning segment. The short motif at 111-113 (NPA) is the NPA 1 element. Residues 111–128 (NPAVTLALMAWRGFPWWK) lie on the Cytoplasmic side of the membrane. A helical membrane pass occupies residues 129–149 (VPGFIFAQLLGGIVGAGLVYV). The Extracellular segment spans residues 150–183 (NYIHAIDIVEGGRHIRTLDTAGLFATYAADYMTN). An N-linked (GlcNAc...) asparagine glycan is attached at Asn-183. A helical membrane pass occupies residues 184-204 (VSCFFSEFLATAVLIVVIHAM). Residues 205–213 (NDKRNAPPP) are Cytoplasmic-facing. A helical membrane pass occupies residues 214–234 (AGLAPLVLFFLILGIGASLGM). The Extracellular portion of the chain corresponds to 235-267 (ETGYAINPARDLGPRMLTAMVGYGRQVFAFRNQ). The NPA 2 signature appears at 241 to 243 (NPA). A helical membrane pass occupies residues 268–288 (YWIWCPVIAPFLGAQVGTIFY). Topologically, residues 289–312 (DLFFYKGQDNVFGRLGSHIHISPA) are cytoplasmic.

This sequence belongs to the MIP/aquaporin (TC 1.A.8) family.

Its subcellular location is the membrane. The catalysed reaction is H2O(in) = H2O(out). It catalyses the reaction glycerol(in) = glycerol(out). It carries out the reaction NH4(+)(in) = NH4(+)(out). Water channel required to facilitate the transport of water across membranes. In addition to water, also shows strong glycerol and ammonium transport activities. May be involved in fungal nitrogen (ammonium) support of the plant host in symbiosis. Glycerol accumulation has never been observed in ectomycorrhizal (ECM) fungi, therefore, glycerol permeability of Lacbi1:391485 might be a relict of the affiliation of the protein to the group of aquaglyceroporins, and other osmotic active compounds (e.g. trehalose or mannitol) may have taken over glycerol function in ECM fungi. This is Aquaporin Lacbi1:391485 from Laccaria bicolor (strain S238N-H82 / ATCC MYA-4686) (Bicoloured deceiver).